Here is a 330-residue protein sequence, read N- to C-terminus: MTVIVTGAAGFIGANIVKALNERGESRIIAVDNLTRADKFRNLVDCEIDDYLDKTEFVERFTRGDFGKVRAVFHEGACSDTMETDGRYMMDNNFRYSRAVLDACLAQGAQFLYASSAAIYGGSTRFVEEREVEAPLNVYGYSKFLFDQVIRRVLPSAKSQIAGFRYFNVYGPRETHKGRMASVAFHNFNQFRAEGKVKLFGEYNGYAPGEQTRDFVSVEDVAKVNLFFFDHPEKSGIFNLGTGRAQPFNDIASTVVNTLRALDNLPPLTLAQQVEQGLIEYVAFPDALRGKYQCFTQADQTKLRSAGYDAPFLTVQEGVDRYVRWLSGQV.

NADP(+) contacts are provided by residues 11–12, 32–33, lysine 39, lysine 54, 75–79, and asparagine 92; these read FI, DN, and EGACS. The active-site Proton acceptor is the tyrosine 139. Lysine 143 provides a ligand contact to NADP(+). Residue asparagine 168 coordinates substrate. 2 residues coordinate NADP(+): valine 169 and lysine 177. The active-site Proton acceptor is the lysine 177. Substrate is bound by residues arginine 179, histidine 186, 200–203, arginine 213, and tyrosine 292; that span reads FGEY.

It belongs to the NAD(P)-dependent epimerase/dehydratase family. HldD subfamily. Homopentamer. NADP(+) serves as cofactor.

It catalyses the reaction ADP-D-glycero-beta-D-manno-heptose = ADP-L-glycero-beta-D-manno-heptose. Its pathway is nucleotide-sugar biosynthesis; ADP-L-glycero-beta-D-manno-heptose biosynthesis; ADP-L-glycero-beta-D-manno-heptose from D-glycero-beta-D-manno-heptose 7-phosphate: step 4/4. In terms of biological role, catalyzes the interconversion between ADP-D-glycero-beta-D-manno-heptose and ADP-L-glycero-beta-D-manno-heptose via an epimerization at carbon 6 of the heptose. The protein is ADP-L-glycero-D-manno-heptose-6-epimerase of Burkholderia ambifaria (strain ATCC BAA-244 / DSM 16087 / CCUG 44356 / LMG 19182 / AMMD) (Burkholderia cepacia (strain AMMD)).